The primary structure comprises 900 residues: Alanine--tRNA ligase (900 aa).

Positions 580, 584, 683, and 687 each coordinate Zn(2+).

It belongs to the class-II aminoacyl-tRNA synthetase family. It depends on Zn(2+) as a cofactor.

The protein resides in the cytoplasm. It catalyses the reaction tRNA(Ala) + L-alanine + ATP = L-alanyl-tRNA(Ala) + AMP + diphosphate. Catalyzes the attachment of alanine to tRNA(Ala) in a two-step reaction: alanine is first activated by ATP to form Ala-AMP and then transferred to the acceptor end of tRNA(Ala). Also edits incorrectly charged Ser-tRNA(Ala) and Gly-tRNA(Ala) via its editing domain. The protein is Alanine--tRNA ligase of Mycolicibacterium paratuberculosis (strain ATCC BAA-968 / K-10) (Mycobacterium paratuberculosis).